The primary structure comprises 442 residues: Putative arsenical pump membrane protein (442 aa).

The next 11 helical transmembrane spans lie at 22–42, 56–76, 85–105, 107–127, 136–156, 174–194, 250–270, 294–314, 328–347, 378–398, and 419–439; these read IPAT…LADL, ILAT…YWVA, GSGI…TIFL, NDGS…YLGL, LLSG…SNIV, MMFV…FMFF, LFAA…GSFI, IFIF…IGFT, SLAH…SNLF, IIGS…TLIW, and IIII…WISW.

This sequence belongs to the ArsB family.

The protein resides in the cell membrane. In Bacillus subtilis (strain 168), this protein is Putative arsenical pump membrane protein (ywrK).